The primary structure comprises 267 residues: tRNA pseudouridine synthase A (267 aa).

The active-site Nucleophile is aspartate 51. Tyrosine 109 is a substrate binding site.

This sequence belongs to the tRNA pseudouridine synthase TruA family.

The catalysed reaction is uridine(38/39/40) in tRNA = pseudouridine(38/39/40) in tRNA. Its function is as follows. Formation of pseudouridine at positions 38, 39 and 40 in the anticodon stem and loop of transfer RNAs. The polypeptide is tRNA pseudouridine synthase A (Methanothrix thermoacetophila (strain DSM 6194 / JCM 14653 / NBRC 101360 / PT) (Methanosaeta thermophila)).